A 362-amino-acid polypeptide reads, in one-letter code: tRNA/tmRNA (uracil-C(5))-methyltransferase (362 aa).

5 residues coordinate S-adenosyl-L-methionine: Gln-182, Tyr-210, Asn-215, Glu-231, and Asp-293. The active-site Nucleophile is Cys-318. The active-site Proton acceptor is the Glu-352.

Belongs to the class I-like SAM-binding methyltransferase superfamily. RNA M5U methyltransferase family. TrmA subfamily.

It catalyses the reaction uridine(54) in tRNA + S-adenosyl-L-methionine = 5-methyluridine(54) in tRNA + S-adenosyl-L-homocysteine + H(+). The catalysed reaction is uridine(341) in tmRNA + S-adenosyl-L-methionine = 5-methyluridine(341) in tmRNA + S-adenosyl-L-homocysteine + H(+). Functionally, dual-specificity methyltransferase that catalyzes the formation of 5-methyluridine at position 54 (m5U54) in all tRNAs, and that of position 341 (m5U341) in tmRNA (transfer-mRNA). This Neisseria meningitidis serogroup B (strain ATCC BAA-335 / MC58) protein is tRNA/tmRNA (uracil-C(5))-methyltransferase.